Here is a 391-residue protein sequence, read N- to C-terminus: Phosphoprotein (391 aa).

A phosphothreonine mark is found at Thr-10, Thr-16, and Thr-39. Ser-69 carries the phosphoserine modification. 2 disordered regions span residues 82–101 (SSSEVGTGGTQIPEPLFAQT) and 143–208 (PRTS…PANV). Thr-91, Thr-150, and Thr-165 each carry phosphothreonine. The residue at position 188 (Ser-188) is a Phosphoserine. Residues 198–208 (LPQQDSTPANV) are compositionally biased toward polar residues. The stretch at 218–245 (ANEIMDLLRGMDARLQHLEQKVDKVLAQ) forms a coiled coil. Thr-250 is modified (phosphothreonine). The residue at position 257 (Ser-257) is a Phosphoserine. 2 positions are modified to phosphothreonine: Thr-258 and Thr-282. Phosphoserine occurs at positions 292 and 294. Thr-298 is modified (phosphothreonine). A phosphoserine mark is found at Ser-301 and Ser-374. The interval 343–391 (AGRKVMITKMITDCVANPQMKQAFEQRLAKASTEDALNDIKRDIIRSAI) is interaction with the nucleoprotein. Residues 348–391 (MITKMITDCVANPQMKQAFEQRLAKASTEDALNDIKRDIIRSAI) are x domain (XD). Thr-375 carries the post-translational modification Phosphothreonine.

The protein belongs to the rubulavirus/avulavirus P protein family. As to quaternary structure, homotetramer. Interacts (via multimerization domain) with polymerase L; this interaction forms the polymerase L-P complex. Interacts (via N-terminus) with N0 (via Ncore); this interaction allows P to chaperon N0 to avoid N polymerization before encapsidation. Interacts (via C-terminus) with N-RNA template; this interaction positions the polymerase on the template for both transcription and replication. Interacts with host RPS6KB1 kinase; this interaction may play a role in the viral replication and transcription.

The protein resides in the virion. Essential cofactor of the RNA polymerase L that plays a central role in the transcription and replication by forming the polymerase complex with RNA polymerase L and recruiting L to the genomic N-RNA template for RNA synthesis. Also plays a central role in the encapsidation of nascent RNA chains by forming the encapsidation complex with the nucleocapsid protein N (N-P complex). Acts as a chaperone for newly synthesized free N protein, so-called N0, allowing encapsidation of nascent RNA chains during replication. The nucleoprotein protein N prevents excessive phosphorylation of P, which leads to down-regulation of viral transcription/ replication. Participates, together with N, in the formation of viral factories (viroplasms), which are large inclusions in the host cytoplasm where replication takes place. The protein is Phosphoprotein (V/P) of Mumps orthorubulavirus (MuV).